The sequence spans 530 residues: Cytochrome P450 monooxygenase sttB (530 aa).

The N-linked (GlcNAc...) asparagine glycan is linked to Asn5. The chain crosses the membrane as a helical span at residues 24–44; it reads LPILTVALLTGIASAVYINVS. A glycan (N-linked (GlcNAc...) asparagine) is linked at Asn230.

The protein belongs to the cytochrome P450 family. Heme is required as a cofactor.

It localises to the membrane. The catalysed reaction is preaspterpenacid acid I + reduced [NADPH--hemoprotein reductase] + O2 = preaspterpenacid acid II + oxidized [NADPH--hemoprotein reductase] + H2O + H(+). It participates in secondary metabolite biosynthesis; terpenoid biosynthesis. Functionally, cytochrome P450 monooxygenase; part of the gene cluster that mediates the biosynthesis of aspterpenacids. Performs the C22-oxidative modification of the terpene synthase sttA product preaspterpenacid I to produce preaspterpenacid II. It has still to be determined how preaspterpenacid II is further modified to produce aspterpenacids. The protein is Cytochrome P450 monooxygenase sttB of Aspergillus terreus (strain NIH 2624 / FGSC A1156).